Here is an 86-residue protein sequence, read N- to C-terminus: Large ribosomal subunit protein uL23 (86 aa).

It belongs to the universal ribosomal protein uL23 family. Part of the 50S ribosomal subunit. Contacts protein L29.

Binds to 23S rRNA. One of the proteins that surrounds the polypeptide exit tunnel on the outside of the ribosome. This chain is Large ribosomal subunit protein uL23, found in Pyrococcus abyssi (strain GE5 / Orsay).